Consider the following 350-residue polypeptide: MSALIPASEVILRHQDTFSDKQVVIAGDVQDLLPARLEARSVKVHTAWFHHRQTLARALGEQAVQFGLVADAALGGGCDTLIYYWPKNKPEALFQLTNLLSLLPLGCDVFVVGENRSGVRSAEPMLAAWCPLAKIDSARRCGLYHGELVQQPRFDAEAFWQSYQLEDVVIKTLPGVFSRDGLDNGSQLLLSTFDRPFQGHVADIGCGTGVLSAVLAKGAAGVQLTLSDAHAPALAASRATLAVNGLQGEVLAGDVYSAISGRFDMIISNPPFHDGMQTNLKAAETLIRGALNHLRIGGELRIVANAFLPYPDLLDAVFGNHQVLVQNGRFKVYQAIHQVKRSRDKGPKRR.

It belongs to the methyltransferase superfamily. RsmC family. As to quaternary structure, monomer.

It is found in the cytoplasm. The enzyme catalyses guanosine(1207) in 16S rRNA + S-adenosyl-L-methionine = N(2)-methylguanosine(1207) in 16S rRNA + S-adenosyl-L-homocysteine + H(+). Functionally, specifically methylates the guanine in position 1207 of 16S rRNA in the 30S particle. In Sodalis glossinidius (strain morsitans), this protein is Ribosomal RNA small subunit methyltransferase C.